We begin with the raw amino-acid sequence, 273 residues long: Ribosomal RNA small subunit methyltransferase I (273 aa).

The protein belongs to the methyltransferase superfamily. RsmI family.

It localises to the cytoplasm. The enzyme catalyses cytidine(1402) in 16S rRNA + S-adenosyl-L-methionine = 2'-O-methylcytidine(1402) in 16S rRNA + S-adenosyl-L-homocysteine + H(+). Its function is as follows. Catalyzes the 2'-O-methylation of the ribose of cytidine 1402 (C1402) in 16S rRNA. In Xylella fastidiosa (strain 9a5c), this protein is Ribosomal RNA small subunit methyltransferase I.